Here is a 337-residue protein sequence, read N- to C-terminus: Alanine racemase (337 aa).

Residue K33 is the Proton acceptor; specific for D-alanine of the active site. Residue K33 is modified to N6-(pyridoxal phosphate)lysine. Substrate is bound at residue R118. Y246 acts as the Proton acceptor; specific for L-alanine in catalysis. M292 contributes to the substrate binding site.

This sequence belongs to the alanine racemase family. The cofactor is pyridoxal 5'-phosphate.

It catalyses the reaction L-alanine = D-alanine. It functions in the pathway amino-acid biosynthesis; D-alanine biosynthesis; D-alanine from L-alanine: step 1/1. Catalyzes the interconversion of L-alanine and D-alanine. May also act on other amino acids. In Campylobacter concisus (strain 13826), this protein is Alanine racemase (alr).